Here is a 201-residue protein sequence, read N- to C-terminus: Translation initiation factor IF-3 (201 aa).

Belongs to the IF-3 family. As to quaternary structure, monomer.

Its subcellular location is the cytoplasm. IF-3 binds to the 30S ribosomal subunit and shifts the equilibrium between 70S ribosomes and their 50S and 30S subunits in favor of the free subunits, thus enhancing the availability of 30S subunits on which protein synthesis initiation begins. This Prochlorococcus marinus (strain SARG / CCMP1375 / SS120) protein is Translation initiation factor IF-3.